Consider the following 252-residue polypeptide: 5'-nucleotidase SurE (252 aa).

Positions 8, 9, 39, and 91 each coordinate a divalent metal cation.

It belongs to the SurE nucleotidase family. The cofactor is a divalent metal cation.

Its subcellular location is the cytoplasm. The catalysed reaction is a ribonucleoside 5'-phosphate + H2O = a ribonucleoside + phosphate. Functionally, nucleotidase that shows phosphatase activity on nucleoside 5'-monophosphates. The polypeptide is 5'-nucleotidase SurE (Geobacter metallireducens (strain ATCC 53774 / DSM 7210 / GS-15)).